The sequence spans 288 residues: Bifunctional protein FolD (288 aa).

NADP(+)-binding positions include 166 to 168 (GAS) and Ile-232.

It belongs to the tetrahydrofolate dehydrogenase/cyclohydrolase family. Homodimer.

It catalyses the reaction (6R)-5,10-methylene-5,6,7,8-tetrahydrofolate + NADP(+) = (6R)-5,10-methenyltetrahydrofolate + NADPH. The catalysed reaction is (6R)-5,10-methenyltetrahydrofolate + H2O = (6R)-10-formyltetrahydrofolate + H(+). The protein operates within one-carbon metabolism; tetrahydrofolate interconversion. Its function is as follows. Catalyzes the oxidation of 5,10-methylenetetrahydrofolate to 5,10-methenyltetrahydrofolate and then the hydrolysis of 5,10-methenyltetrahydrofolate to 10-formyltetrahydrofolate. The polypeptide is Bifunctional protein FolD (Escherichia coli O139:H28 (strain E24377A / ETEC)).